A 706-amino-acid polypeptide reads, in one-letter code: SPX domain-containing membrane protein Os09g0521800 (706 aa).

The SPX domain occupies 2-145; that stretch reads VNFSNKLTKD…GYKFTDYYVR (144 aa). Transmembrane regions (helical) follow at residues 251-271, 281-301, 318-338, 340-359, 378-398, and 414-434; these read MSLVLNLANTFLYMVNTYIVV, LGAAATACGAVIGSMAVAQVF, LLFSSVVLLLGNVMYAMAFDL, SLTILLLGRVLCGMGSARAV, AAFVSASALGMACGPALAGLL, and LPGWIMAFGWLVYLIWLWILF. The interval 475 to 498 is disordered; it reads SEQDEEDDNGDEEHNETLSSSTTT. Positions 476 to 488 are enriched in acidic residues; it reads EQDEEDDNGDEEH. Helical transmembrane passes span 520–540, 554–574, 583–603, 611–631, and 678–698; these read LLIYFMLKYAMEILLAESSVV, VFLAVLGLSVLPVNAIVGTYI, ILVASEMALLAGVMLSFKLTV, VCSAVLTFVSAEVVEGVNLSL, and LLNATLLPALLVCVASIAATL.

Belongs to the major facilitator superfamily.

It localises to the membrane. This Oryza sativa subsp. japonica (Rice) protein is SPX domain-containing membrane protein Os09g0521800.